The primary structure comprises 618 residues: Methylmalonyl-CoA mutase small subunit (618 aa).

It belongs to the methylmalonyl-CoA mutase family. As to quaternary structure, heterodimer of an alpha and a beta chain. Adenosylcob(III)alamin is required as a cofactor.

The catalysed reaction is (R)-methylmalonyl-CoA = succinyl-CoA. It functions in the pathway metabolic intermediate metabolism; propanoyl-CoA degradation; succinyl-CoA from propanoyl-CoA: step 3/3. Catalyzes the isomerization of succinyl-CoA to methylmalonyl-CoA during synthesis of propionate from tricarboxylic acid-cycle intermediates. In Porphyromonas gingivalis (strain ATCC BAA-308 / W83), this protein is Methylmalonyl-CoA mutase small subunit (mutA).